The chain runs to 481 residues: Keratin, type I cytoskeletal 39 (481 aa).

A disordered region spans residues 1-25 (MDTKGSTVTISSSTPPQNCSGNTNV). The interval 1-90 (MDTKGSTVTI…RCSDGINSHE (90 aa)) is head. The IF rod domain occupies 90–401 (EKETMQILNE…SLLESLDGRL (312 aa)). The interval 91–125 (KETMQILNERLASYLEKVRMLEGENADLEDKIQEE) is coil 1A. The tract at residues 126–136 (CSKTLPILCPD) is linker 1. The interval 137-237 (YLSYYTTIEQ…HEEEINSLQC (101 aa)) is coil 1B. The interval 238 to 253 (QLGDRINIEVTAAPSV) is linker 12. The tract at residues 254-397 (DLNQILQKMR…ATYRSLLESL (144 aa)) is coil 2. The tail stretch occupies residues 398 to 481 (DGRLPCNPCT…PCYITRPAKV (84 aa)).

It belongs to the intermediate filament family. Heterotetramer of two type I and two type II keratins.

In terms of biological role, may play a role in late hair differentiation. The chain is Keratin, type I cytoskeletal 39 (Krt39) from Rattus norvegicus (Rat).